A 149-amino-acid chain; its full sequence is D-aminoacyl-tRNA deacylase (149 aa).

A Gly-cisPro motif, important for rejection of L-amino acids motif is present at residues G137–P138.

It belongs to the DTD family. In terms of assembly, homodimer.

Its subcellular location is the cytoplasm. It carries out the reaction glycyl-tRNA(Ala) + H2O = tRNA(Ala) + glycine + H(+). The catalysed reaction is a D-aminoacyl-tRNA + H2O = a tRNA + a D-alpha-amino acid + H(+). In terms of biological role, an aminoacyl-tRNA editing enzyme that deacylates mischarged D-aminoacyl-tRNAs. Also deacylates mischarged glycyl-tRNA(Ala), protecting cells against glycine mischarging by AlaRS. Acts via tRNA-based rather than protein-based catalysis; rejects L-amino acids rather than detecting D-amino acids in the active site. By recycling D-aminoacyl-tRNA to D-amino acids and free tRNA molecules, this enzyme counteracts the toxicity associated with the formation of D-aminoacyl-tRNA entities in vivo and helps enforce protein L-homochirality. The polypeptide is D-aminoacyl-tRNA deacylase (Thioalkalivibrio sulfidiphilus (strain HL-EbGR7)).